The following is a 181-amino-acid chain: Oligoribonuclease (181 aa).

Residues 8 to 171 enclose the Exonuclease domain; sequence LIWIDLEMTG…QDIQESIAEL (164 aa). The active site involves Tyr129.

This sequence belongs to the oligoribonuclease family.

Its subcellular location is the cytoplasm. Its function is as follows. 3'-to-5' exoribonuclease specific for small oligoribonucleotides. The sequence is that of Oligoribonuclease from Shewanella sp. (strain ANA-3).